We begin with the raw amino-acid sequence, 177 residues long: GTP-dependent dephospho-CoA kinase (177 aa).

Positions 48, 49, 50, 67, 69, and 124 each coordinate GTP.

Belongs to the GTP-dependent DPCK family.

The catalysed reaction is 3'-dephospho-CoA + GTP = GDP + CoA + H(+). It participates in cofactor biosynthesis; coenzyme A biosynthesis. In terms of biological role, catalyzes the GTP-dependent phosphorylation of the 3'-hydroxyl group of dephosphocoenzyme A to form coenzyme A (CoA). The protein is GTP-dependent dephospho-CoA kinase of Pyrococcus furiosus (strain ATCC 43587 / DSM 3638 / JCM 8422 / Vc1).